The following is a 159-amino-acid chain: Ribosomal RNA large subunit methyltransferase H (159 aa).

Residues Leu-76, Gly-108, and 127 to 132 (FSKMTF) contribute to the S-adenosyl-L-methionine site.

This sequence belongs to the RNA methyltransferase RlmH family. Homodimer.

The protein localises to the cytoplasm. The catalysed reaction is pseudouridine(1915) in 23S rRNA + S-adenosyl-L-methionine = N(3)-methylpseudouridine(1915) in 23S rRNA + S-adenosyl-L-homocysteine + H(+). Its function is as follows. Specifically methylates the pseudouridine at position 1915 (m3Psi1915) in 23S rRNA. The sequence is that of Ribosomal RNA large subunit methyltransferase H from Bifidobacterium longum subsp. infantis (strain ATCC 15697 / DSM 20088 / JCM 1222 / NCTC 11817 / S12).